A 246-amino-acid polypeptide reads, in one-letter code: Aquaporin SIP1-1 (246 aa).

2 helical membrane-spanning segments follow: residues 13-33 (AAVT…TAAV) and 45-65 (YALL…NLLC). The NPA 1 motif lies at 74–76 (NPT). Helical transmembrane passes span 95–115 (FPLA…AMAI), 139–159 (GAAA…WIIV), and 166–186 (IVKT…GAAY). Positions 192 to 194 (NPA) match the NPA 2 motif. The chain crosses the membrane as a helical span at residues 214–234 (VYWICPFVGAVLAAWVFRAVF).

It belongs to the MIP/aquaporin (TC 1.A.8) family. SIP (TC 1.A.8.10) subfamily. Expressed in roots, leaves and anthers.

It localises to the membrane. In terms of biological role, aquaporins facilitate the transport of water and small neutral solutes across cell membranes. This is Aquaporin SIP1-1 (SIP1-1) from Oryza sativa subsp. japonica (Rice).